Consider the following 136-residue polypeptide: Ribonuclease P protein component (136 aa).

Belongs to the RnpA family. As to quaternary structure, consists of a catalytic RNA component (M1 or rnpB) and a protein subunit.

It catalyses the reaction Endonucleolytic cleavage of RNA, removing 5'-extranucleotides from tRNA precursor.. In terms of biological role, RNaseP catalyzes the removal of the 5'-leader sequence from pre-tRNA to produce the mature 5'-terminus. It can also cleave other RNA substrates such as 4.5S RNA. The protein component plays an auxiliary but essential role in vivo by binding to the 5'-leader sequence and broadening the substrate specificity of the ribozyme. The polypeptide is Ribonuclease P protein component (Burkholderia pseudomallei (strain 1106a)).